Consider the following 497-residue polypeptide: MAPVGVEKKLLLGPNGPAVAAAGDLTSEEEEGQSLWSSILSEVSTRARSKLPSGKNILVFGEDGSGKTTLMTKLQGAEHGKKGRGLEYLYLSVHDEDRDDHTRCNVWILDGDLYHKGLLKFAVSAESLRETLVIFVADMSRPWTIMESLQKWASVLREHIDKMKIPPEEMRDLERKFMKDFQDYIEPEEGCQGSPQRRGPLTSGSDEDNVALPLGDNVLTHNLGIPVLVVCTKCDAVSILEKEHDYRDEHLDFIQAHLRGFCLQYGAALIYTSVKEEKNLDLLYKYIVHKTYGFHFTIPALVVEKDAVFIPAGWDNEKKIAILHENFTTVKPEDAYEDFIVKPPVRKLVHDKELAAEDEQVFLMKQQESPARGPSGSPRTQGRGGPASVPSASPGTSVKKPDPNIKNNAASEGVLASFFNSLLSKKTGSPGSPSAGGVQSTAKKSGTEGEPQSFRSLTEQCCQTGQKTVLSNVQEELDRMTRKPDSMVTNSSTENEA.

61-68 (GEDGSGKT) contacts ATP. Disordered regions lie at residues 187–206 (PEEG…SGSD), 366–408 (QQES…IKNN), 423–461 (LSKK…TEQC), and 474–497 (QEEL…ENEA). Phosphoserine occurs at positions 194, 369, and 377. An Omega-N-methylarginine modification is found at Arg-383. Residues 423 to 444 (LSKKTGSPGSPSAGGVQSTAKK) are compositionally biased toward polar residues. Position 427 is a phosphothreonine (Thr-427). A phosphoserine mark is found at Ser-429 and Ser-432. A compositionally biased stretch (basic and acidic residues) spans 476-485 (ELDRMTRKPD). Over residues 487–497 (MVTNSSTENEA) the composition is skewed to polar residues.

The protein belongs to the dynein light intermediate chain family. In terms of assembly, homodimer. The cytoplasmic dynein 1 complex consists of two catalytic heavy chains (HCs) and a number of non-catalytic subunits presented by intermediate chains (ICs), light intermediate chains (LICs) and light chains (LCs); the composition seems to vary in respect to the IC, LIC and LC composition. The heavy chain homodimer serves as a scaffold for the probable homodimeric assembly of the respective non-catalytic subunits. The ICs and LICs bind directly to the HC dimer and the LCs assemble on the IC dimer. Self-associates. Interacts with DYNC1H1; DYNC1LI1 and DYNC1LI2 bind mutually exclusive to DYNC1H1. Ubiquitous.

Its subcellular location is the cytoplasm. It localises to the cytoskeleton. In terms of biological role, acts as one of several non-catalytic accessory components of the cytoplasmic dynein 1 complex that are thought to be involved in linking dynein to cargos and to adapter proteins that regulate dynein function. Cytoplasmic dynein 1 acts as a motor for the intracellular retrograde motility of vesicles and organelles along microtubules. May play a role in binding dynein to membranous organelles or chromosomes. This chain is Cytoplasmic dynein 1 light intermediate chain 2 (Dync1li2), found in Rattus norvegicus (Rat).